The following is a 971-amino-acid chain: Exportin-2 (971 aa).

N-acetylmethionine is present on Met1. The Importin N-terminal domain maps to 29 to 102; the sequence is AEKFLESVEG…KANIVHLMLS (74 aa). Ser112 carries the phosphoserine modification. Lys574 and Lys824 each carry N6-acetyllysine. Ser931 carries the post-translational modification Phosphoserine.

Belongs to the XPO2/CSE1 family. As to quaternary structure, found in a complex with CSE1L/XPO2, Ran and KPNA2. Binds with high affinity to importin-alpha only in the presence of RanGTP. The complex is dissociated by the combined action of RanBP1 and RanGAP1. Interacts with CFTR.

It localises to the cytoplasm. Its subcellular location is the nucleus. In terms of biological role, export receptor for importin-alpha. Mediates importin-alpha re-export from the nucleus to the cytoplasm after import substrates (cargos) have been released into the nucleoplasm. In the nucleus binds cooperatively to importin-alpha and to the GTPase Ran in its active GTP-bound form. Docking of this trimeric complex to the nuclear pore complex (NPC) is mediated through binding to nucleoporins. Upon transit of a nuclear export complex into the cytoplasm, disassembling of the complex and hydrolysis of Ran-GTP to Ran-GDP (induced by RANBP1 and RANGAP1, respectively) cause release of the importin-alpha from the export receptor. CSE1L/XPO2 then return to the nuclear compartment and mediate another round of transport. The directionality of nuclear export is thought to be conferred by an asymmetric distribution of the GTP- and GDP-bound forms of Ran between the cytoplasm and nucleus. This is Exportin-2 (CSE1L) from Pongo abelii (Sumatran orangutan).